The chain runs to 299 residues: MDNKSQRRNNENQKKVEALDFLSFMRRPNCIAEILRQHTQIIEESNNYYYLKMKTKDNKSQGPLRSLLCLPKNVNQKTDSAFCSVDGYNVKNKFLCTRSPNQDSLYQFWSMAYKKNIHIIVMLSPIDNLMRHRYWSLEEDEVFECREFRIETLQVDVQAFYITTTLQLKHENGAVRKIVHFNYTGWPVDNISHHPKEFISFILTVNSARDEVDKLSARNSHTLGPIMVHCSDGFNNSCVYCLLDICISEFGATSNVSVPNTFSKIRQQNRHAISQPENYVYCYQALYVWISSISNSLHH.

The Tyrosine-protein phosphatase domain occupies 16–289; sequence VEALDFLSFM…VYCYQALYVW (274 aa). Cysteine 230 acts as the Phosphocysteine intermediate in catalysis.

The protein belongs to the protein-tyrosine phosphatase family.

The enzyme catalyses O-phospho-L-tyrosyl-[protein] + H2O = L-tyrosyl-[protein] + phosphate. This Microplitis demolitor bracovirus (isolate Webb) (MdBV) protein is Probable tyrosine phosphatase protein J4 (J5).